A 145-amino-acid polypeptide reads, in one-letter code: D-aminoacyl-tRNA deacylase (145 aa).

The Gly-cisPro motif, important for rejection of L-amino acids signature appears at 137–138; the sequence is GP.

It belongs to the DTD family. Homodimer.

It is found in the cytoplasm. It carries out the reaction glycyl-tRNA(Ala) + H2O = tRNA(Ala) + glycine + H(+). The catalysed reaction is a D-aminoacyl-tRNA + H2O = a tRNA + a D-alpha-amino acid + H(+). Functionally, an aminoacyl-tRNA editing enzyme that deacylates mischarged D-aminoacyl-tRNAs. Also deacylates mischarged glycyl-tRNA(Ala), protecting cells against glycine mischarging by AlaRS. Acts via tRNA-based rather than protein-based catalysis; rejects L-amino acids rather than detecting D-amino acids in the active site. By recycling D-aminoacyl-tRNA to D-amino acids and free tRNA molecules, this enzyme counteracts the toxicity associated with the formation of D-aminoacyl-tRNA entities in vivo and helps enforce protein L-homochirality. This is D-aminoacyl-tRNA deacylase from Saccharophagus degradans (strain 2-40 / ATCC 43961 / DSM 17024).